The sequence spans 448 residues: Tubulin beta-1 chain (448 aa).

Residues glutamine 11, glutamate 69, serine 138, glycine 142, threonine 143, glycine 144, asparagine 204, and asparagine 226 each contribute to the GTP site. Glutamate 69 lines the Mg(2+) pocket. Residues aspartate 427 to glutamate 448 are disordered. The span at threonine 429–glutamate 448 shows a compositional bias: acidic residues.

Belongs to the tubulin family. As to quaternary structure, dimer of alpha and beta chains. A typical microtubule is a hollow water-filled tube with an outer diameter of 25 nm and an inner diameter of 15 nM. Alpha-beta heterodimers associate head-to-tail to form protofilaments running lengthwise along the microtubule wall with the beta-tubulin subunit facing the microtubule plus end conferring a structural polarity. Microtubules usually have 13 protofilaments but different protofilament numbers can be found in some organisms and specialized cells. Mg(2+) is required as a cofactor.

It is found in the cytoplasm. The protein localises to the cytoskeleton. Functionally, tubulin is the major constituent of microtubules, a cylinder consisting of laterally associated linear protofilaments composed of alpha- and beta-tubulin heterodimers. Microtubules grow by the addition of GTP-tubulin dimers to the microtubule end, where a stabilizing cap forms. Below the cap, tubulin dimers are in GDP-bound state, owing to GTPase activity of alpha-tubulin. The chain is Tubulin beta-1 chain from Brugia pahangi (Filarial nematode worm).